Reading from the N-terminus, the 422-residue chain is 3-phosphoshikimate 1-carboxyvinyltransferase (422 aa).

3 residues coordinate 3-phosphoshikimate: K20, S21, and R25. A phosphoenolpyruvate-binding site is contributed by K20. Phosphoenolpyruvate contacts are provided by G90 and R118. 3-phosphoshikimate contacts are provided by S163, S164, Q165, S191, D306, and K333. Q165 lines the phosphoenolpyruvate pocket. D306 functions as the Proton acceptor in the catalytic mechanism. Positions 337 and 378 each coordinate phosphoenolpyruvate.

This sequence belongs to the EPSP synthase family. In terms of assembly, monomer.

It is found in the cytoplasm. The catalysed reaction is 3-phosphoshikimate + phosphoenolpyruvate = 5-O-(1-carboxyvinyl)-3-phosphoshikimate + phosphate. The protein operates within metabolic intermediate biosynthesis; chorismate biosynthesis. In terms of biological role, catalyzes the transfer of the enolpyruvyl moiety of phosphoenolpyruvate (PEP) to the 5-hydroxyl of shikimate-3-phosphate (S3P) to produce enolpyruvyl shikimate-3-phosphate and inorganic phosphate. The sequence is that of 3-phosphoshikimate 1-carboxyvinyltransferase from Methanocella arvoryzae (strain DSM 22066 / NBRC 105507 / MRE50).